The sequence spans 286 residues: Putative WUSCHEL-related homeobox 2 (286 aa).

2 disordered regions span residues 1 to 25 (MAPAVQQQQSGGGGGSTGAAAVGST) and 128 to 152 (SSSSSCGGGLNEDANSLLSPTSPTT). The segment at residues 23–87 (GSTTRWCPTP…NHKARDRQKL (65 aa)) is a DNA-binding region (homeobox; WUS-type).

This sequence belongs to the WUS homeobox family.

The protein localises to the nucleus. Its function is as follows. Transcription factor which may be involved in developmental processes. The chain is Putative WUSCHEL-related homeobox 2 (WOX2) from Oryza sativa subsp. indica (Rice).